A 265-amino-acid polypeptide reads, in one-letter code: NAD-capped RNA hydrolase NudC (265 aa).

Residue arginine 76 coordinates substrate. 4 residues coordinate Zn(2+): cysteine 106, cysteine 109, cysteine 124, and cysteine 127. Tyrosine 132 is a binding site for substrate. Residues 133–256 (PRISPAMMVL…SIAHRLIRHA (124 aa)) enclose the Nudix hydrolase domain. Residues alanine 166, glutamate 182, and glutamate 186 each contribute to the a divalent metal cation site. The Nudix box signature appears at 167-188 (GFVEPGETLEECVHRETWEEVG). Residue 200 to 207 (QSWPFPHS) participates in substrate binding. Glutamate 227 is a binding site for a divalent metal cation. Residue alanine 249 participates in substrate binding.

It belongs to the Nudix hydrolase family. NudC subfamily. Homodimer. Requires Mg(2+) as cofactor. The cofactor is Mn(2+). Zn(2+) serves as cofactor.

It carries out the reaction a 5'-end NAD(+)-phospho-ribonucleoside in mRNA + H2O = a 5'-end phospho-adenosine-phospho-ribonucleoside in mRNA + beta-nicotinamide D-ribonucleotide + 2 H(+). The catalysed reaction is NAD(+) + H2O = beta-nicotinamide D-ribonucleotide + AMP + 2 H(+). The enzyme catalyses NADH + H2O = reduced beta-nicotinamide D-ribonucleotide + AMP + 2 H(+). In terms of biological role, mRNA decapping enzyme that specifically removes the nicotinamide adenine dinucleotide (NAD) cap from a subset of mRNAs by hydrolyzing the diphosphate linkage to produce nicotinamide mononucleotide (NMN) and 5' monophosphate mRNA. The NAD-cap is present at the 5'-end of some mRNAs and stabilizes RNA against 5'-processing. Has preference for mRNAs with a 5'-end purine. Catalyzes the hydrolysis of a broad range of dinucleotide pyrophosphates. This chain is NAD-capped RNA hydrolase NudC, found in Chromobacterium violaceum (strain ATCC 12472 / DSM 30191 / JCM 1249 / CCUG 213 / NBRC 12614 / NCIMB 9131 / NCTC 9757 / MK).